We begin with the raw amino-acid sequence, 199 residues long: MSQSHFFAHLSRLKLINRWPLMRNVRTENVSEHSLQVAMVAHALAAIKNRKFGGQVNAERIALLAMYHDASEVLTGDLPTPVKYFNSQIAQEYKAIEKIAQQKLVDMVPDELRDIFEPLIDEHHYSEEEQSIVKQADALCAYLKCLEELSAGNNEFLLAKGRLEKTLASRRSAEMDYFMQVFVPSFQLSLDEISQDSPL.

Substrate contacts are provided by residues 18 to 19 (RW) and His-33. The HD domain occupies 30 to 142 (VSEHSLQVAM…VKQADALCAY (113 aa)). A divalent metal cation is bound by residues His-33, His-68, and Asp-69. Substrate contacts are provided by residues Asp-69, 77-80 (DLPT), and Asp-137. A divalent metal cation is bound at residue Asp-137.

The protein belongs to the 5DNU family. As to quaternary structure, homodimer. A divalent metal cation is required as a cofactor.

It is found in the cytoplasm. The enzyme catalyses a 2'-deoxyribonucleoside 5'-phosphate + H2O = a 2'-deoxyribonucleoside + phosphate. Its function is as follows. Catalyzes the strictly specific dephosphorylation of 2'-deoxyribonucleoside 5'-monophosphates. The protein is 5'-deoxynucleotidase KPK_1466 of Klebsiella pneumoniae (strain 342).